Here is a 349-residue protein sequence, read N- to C-terminus: Peptide transport system ATP-binding protein SapD (349 aa).

The ABC transporter domain maps to 1–259; sequence MALLDICNLN…PHHPYTQALI (259 aa). Residue 40-47 coordinates ATP; it reads GESGSGKS.

The protein belongs to the ABC transporter superfamily.

Its subcellular location is the cell inner membrane. In terms of biological role, involved in a peptide intake transport system that plays a role in the resistance to antimicrobial peptides. This is Peptide transport system ATP-binding protein SapD (sapD) from Haemophilus influenzae (strain ATCC 51907 / DSM 11121 / KW20 / Rd).